The following is a 520-amino-acid chain: GMP synthase [glutamine-hydrolyzing] (520 aa).

One can recognise a Glutamine amidotransferase type-1 domain in the interval 9–202 (SVLIVDFGSQ…IHNVAGIKGD (194 aa)). Cys86 (nucleophile) is an active-site residue. Residues His176 and Glu178 contribute to the active site. The GMPS ATP-PPase domain maps to 203–395 (WSMSAYRQKA…LGLPDSFIGR (193 aa)). Residue 230–236 (SGGVDSS) coordinates ATP.

Homodimer.

The enzyme catalyses XMP + L-glutamine + ATP + H2O = GMP + L-glutamate + AMP + diphosphate + 2 H(+). The protein operates within purine metabolism; GMP biosynthesis; GMP from XMP (L-Gln route): step 1/1. In terms of biological role, catalyzes the synthesis of GMP from XMP. The chain is GMP synthase [glutamine-hydrolyzing] from Rhizobium etli (strain ATCC 51251 / DSM 11541 / JCM 21823 / NBRC 15573 / CFN 42).